The following is a 528-amino-acid chain: Calcium-dependent protein kinase 4 (528 aa).

The segment covering 1–16 (MGQEMSTQSDMQNENQ) has biased composition (polar residues). The tract at residues 1-36 (MGQEMSTQSDMQNENQKGNKRNLKGSQGKNGLKERS) is disordered. Glycine 2 is lipidated: N-myristoyl glycine. The 259-residue stretch at 70-328 (YKGIKILGKG…ARDALEHEWI (259 aa)) folds into the Protein kinase domain. Residues 76–84 (LGKGSFGEV) and lysine 99 each bind ATP. Residue aspartate 193 is the Proton acceptor of the active site. Positions 350 to 358 (NIKQFQSTQ) match the J domain autoinhibitory motif motif. The segment at 350-386 (NIKQFQSTQKLAQAALLYMGSKLTTIDETKELTKIFK) is j domain. The short motif at 359 to 368 (KLAQAALLYM) is the J domain EF-hand interaction motif element. EF-hand domains lie at 376-411 (DETKELTKIFKKMDKNGDGQLDRNELIIGYKELLKL), 423-458 (AIEVEVDQILSSIDLDQNGYIEYSEFLTVAIDRKLL), 459-494 (LSTERLEKAFKLFDKDGSGKISANELAQLFGLGDVS), and 498-528 (WKTVLKEVDQNNDGEIDFKEFRDMLIKLCNY). Ca(2+)-binding residues include aspartate 389, asparagine 391, aspartate 393, glutamine 395, glutamate 400, aspartate 436, aspartate 438, asparagine 440, tyrosine 442, glutamate 447, aspartate 472, aspartate 474, serine 476, lysine 478, glutamate 483, aspartate 506, asparagine 508, aspartate 510, glutamate 512, and glutamate 517.

The protein belongs to the protein kinase superfamily. Ser/Thr protein kinase family. CDPK subfamily. In terms of assembly, may interact with the pre-replication MCM complex prior male gametogenesis activation. It depends on Mg(2+) as a cofactor. Post-translationally, myristoylated; myristoylation may target it to different subcellular compartments. During male gametogenesis, myristoylation is required to initiate DNA replication but not for mitotic spindle assembly or axoneme activation. Not palmitoylated. In terms of processing, may be autophosphorylated on Thr-234 in vitro.

It localises to the cytoplasm. The protein localises to the membrane. Its subcellular location is the chromosome. The enzyme catalyses L-seryl-[protein] + ATP = O-phospho-L-seryl-[protein] + ADP + H(+). It carries out the reaction L-threonyl-[protein] + ATP = O-phospho-L-threonyl-[protein] + ADP + H(+). Activated by calcium. Upon calcium binding to the EF-hand domains, the C-terminus of the junction domain (J domain) undergoes a conformational change which results in the dissociation of the pseudo-substrate inhibitory motif from the catalytic domain. This, in turn, may facilitate the autophosphorylation of the activation loop at Thr-234, which leads to the kinase activation. Intracellular calcium increase is triggered by xanthurenic acid (XA), a small mosquito molecule that induces the differentiation of specialized transmission stages, the gametocytes, into male and female gametes. Activated by a decrease in temperature (20 degrees Celsius) and an increase in pH (7.6) occurring when the parasite is ingested by in the mosquito. In terms of biological role, calcium-dependent protein kinase which acts as a sensor and effector of intracellular Ca(2+) levels probably in part downstream of cGMP-activated PKG kinase. Plays a central role in the host erythrocytes and hepatocytes infection cycles, sexual reproduction and mosquito transmission of the parasite. During the liver stage, involved in sporozoite motility and thus in sporozoite invasion of host hepatocytes, probably together with CDPK1 and CDPK5. Involved in merosome egress from host hepatocytes, probably together with CDPK5. During the asexual blood stage, involved in merozoite invasion of host erythrocytes and motility by stabilizing the inner membrane complex, a structure below the plasma membrane which acts as an anchor for the glidosome, an acto-myosin motor. Required for cell cycle progression in the male gametocyte. During male gametogenesis in the mosquito gut, required to initiate the first round of DNA replication, probably by facilitating the assembly of the pre-replicative MCM complex, to assemble the first mitotic spindle and, at the end of gametogenesis, to initiate axoneme motility, cytokinesis and subsequent exflagellation. For each of these steps, may phosphorylate SOC1, SOC2 and SOC3, respectively. Together with CDPK1, regulates ookinete gliding in the mosquito host midgut. Functionally, during male gametogenesis in the mosquito gut, required to initiate the first round of DNA replication, probably by facilitating the assembly of the pre-replicative MCM complex, and to assemble the first mitotic spindle. At the end of male gametogenesis in the mosquito gut, required to initiate axoneme motility, cytokinesis and subsequent exflagellation. The protein is Calcium-dependent protein kinase 4 of Plasmodium berghei (strain Anka).